A 94-amino-acid chain; its full sequence is Protein translocase subunit SecE (94 aa).

The interval 1–32 (MTDAVGSIDMPDAQDEAPDSKKSRKGGKRGKK) is disordered. Residues 22–32 (KSRKGGKRGKK) are compositionally biased toward basic residues. The chain crosses the membrane as a helical span at residues 65-85 (TVVIIFVVIMIGLVTLIDYGF).

It belongs to the SecE/SEC61-gamma family. In terms of assembly, component of the Sec protein translocase complex. Heterotrimer consisting of SecY, SecE and SecG subunits. The heterotrimers can form oligomers, although 1 heterotrimer is thought to be able to translocate proteins. Interacts with the ribosome. Interacts with SecDF, and other proteins may be involved. Interacts with SecA.

The protein resides in the cell membrane. Its function is as follows. Essential subunit of the Sec protein translocation channel SecYEG. Clamps together the 2 halves of SecY. May contact the channel plug during translocation. The chain is Protein translocase subunit SecE from Streptomyces coelicolor (strain ATCC BAA-471 / A3(2) / M145).